We begin with the raw amino-acid sequence, 79 residues long: Large ribosomal subunit protein bL28 (79 aa).

Positions 1–26 (MAKVCQVTGKRPQSGNNVSHANKKTN) are disordered. A compositionally biased stretch (polar residues) spans 11 to 20 (RPQSGNNVSH).

The protein belongs to the bacterial ribosomal protein bL28 family.

In Coxiella burnetii (strain CbuK_Q154) (Coxiella burnetii (strain Q154)), this protein is Large ribosomal subunit protein bL28.